We begin with the raw amino-acid sequence, 125 residues long: Large ribosomal subunit protein bL12 (125 aa).

Belongs to the bacterial ribosomal protein bL12 family. In terms of assembly, homodimer. Part of the ribosomal stalk of the 50S ribosomal subunit. Forms a multimeric L10(L12)X complex, where L10 forms an elongated spine to which 2 to 4 L12 dimers bind in a sequential fashion. Binds GTP-bound translation factors.

Its function is as follows. Forms part of the ribosomal stalk which helps the ribosome interact with GTP-bound translation factors. Is thus essential for accurate translation. This is Large ribosomal subunit protein bL12 from Afipia carboxidovorans (strain ATCC 49405 / DSM 1227 / KCTC 32145 / OM5) (Oligotropha carboxidovorans).